The following is a 134-amino-acid chain: Protein OPG030 (134 aa).

Residues tyrosine 88–isoleucine 133 enclose the BACK domain.

Belongs to the orthopoxvirus OPG030 family.

This chain is Protein OPG030 (OPG30), found in Variola virus (isolate Human/India/Ind3/1967) (VARV).